We begin with the raw amino-acid sequence, 332 residues long: Ubiquinone biosynthesis protein COQ4, mitochondrial (332 aa).

A mitochondrion-targeting transit peptide spans 1 to 24; sequence MLRLGVSRTPINRQFVGYEQRRHF. His-210, Asp-211, His-214, and Glu-226 together coordinate Zn(2+).

This sequence belongs to the COQ4 family. As to quaternary structure, component of a multi-subunit COQ enzyme complex, composed of at least COQ3, COQ4, COQ5, COQ6, COQ7 and COQ9. The cofactor is Zn(2+).

It localises to the mitochondrion inner membrane. It carries out the reaction a 4-hydroxy-3-methoxy-5-(all-trans-polyprenyl)benzoate + H(+) = a 2-methoxy-6-(all-trans-polyprenyl)phenol + CO2. The protein operates within cofactor biosynthesis; ubiquinone biosynthesis. Functionally, lyase that catalyzes the C1-decarboxylation of 4-hydroxy-3-methoxy-5-(all-trans-polyprenyl)benzoic acid into 2-methoxy-6-(all-trans-polyprenyl)phenol during ubiquinone biosynthesis. This Zygosaccharomyces rouxii (strain ATCC 2623 / CBS 732 / NBRC 1130 / NCYC 568 / NRRL Y-229) protein is Ubiquinone biosynthesis protein COQ4, mitochondrial.